Reading from the N-terminus, the 190-residue chain is Large ribosomal subunit protein uL5 (190 aa).

The protein belongs to the universal ribosomal protein uL5 family. As to quaternary structure, part of the 50S ribosomal subunit; part of the 5S rRNA/L5/L18/L25 subcomplex. Contacts the 5S rRNA and the P site tRNA. Forms a bridge to the 30S subunit in the 70S ribosome.

Functionally, this is one of the proteins that bind and probably mediate the attachment of the 5S RNA into the large ribosomal subunit, where it forms part of the central protuberance. In the 70S ribosome it contacts protein S13 of the 30S subunit (bridge B1b), connecting the 2 subunits; this bridge is implicated in subunit movement. Contacts the P site tRNA; the 5S rRNA and some of its associated proteins might help stabilize positioning of ribosome-bound tRNAs. The protein is Large ribosomal subunit protein uL5 of Bifidobacterium longum (strain DJO10A).